The following is a 398-amino-acid chain: MDTHAFKRSLHHSDRYNRRGFGRADEVAGSLEQAYQSSLIGSIRDNGYSLTHGRLKVRLAEAFGFCWGVERAVAMAYETRRHYPQERIWITNEIIHNPSVNDHLREMDVLFISVEGGVKDFSGVATGDVVILPAFGATVQEMQLLNERGCHIVDTTCPWVSKVWTTVEKHKKQSFTSIIHGKVKHEETLATSSFAGTYLVVLDLEEARLVADYILGKGNRESFMERFSKACSPGFDPDRDLEHLGVANQTTMLKSETEEIGRLFERTMLSKYGPTDLNEHFLAFNTICDATQERQDAMFSLVDETVDLMVVIGGYNSSNTTHLQEIAVSRGIRSFHIDTPERIHTDNSIEHKPLGEELTVEELFLPSGPVTVGITSGASTPDRVVEHVIQRLIALSEN.

Cys-66 contacts [4Fe-4S] cluster. (2E)-4-hydroxy-3-methylbut-2-enyl diphosphate is bound at residue His-96. His-96 provides a ligand contact to dimethylallyl diphosphate. His-96 contributes to the isopentenyl diphosphate binding site. Cys-157 serves as a coordination point for [4Fe-4S] cluster. His-185 provides a ligand contact to (2E)-4-hydroxy-3-methylbut-2-enyl diphosphate. His-185 is a binding site for dimethylallyl diphosphate. His-185 contacts isopentenyl diphosphate. Glu-187 (proton donor) is an active-site residue. Position 250 (Thr-250) interacts with (2E)-4-hydroxy-3-methylbut-2-enyl diphosphate. A [4Fe-4S] cluster-binding site is contributed by Cys-288. Residues Ser-317, Ser-318, Asn-319, and Ser-379 each contribute to the (2E)-4-hydroxy-3-methylbut-2-enyl diphosphate site. Residues Ser-317, Ser-318, Asn-319, and Ser-379 each contribute to the dimethylallyl diphosphate site. Residues Ser-317, Ser-318, Asn-319, and Ser-379 each contribute to the isopentenyl diphosphate site.

The protein belongs to the IspH family. Requires [4Fe-4S] cluster as cofactor.

It catalyses the reaction isopentenyl diphosphate + 2 oxidized [2Fe-2S]-[ferredoxin] + H2O = (2E)-4-hydroxy-3-methylbut-2-enyl diphosphate + 2 reduced [2Fe-2S]-[ferredoxin] + 2 H(+). It carries out the reaction dimethylallyl diphosphate + 2 oxidized [2Fe-2S]-[ferredoxin] + H2O = (2E)-4-hydroxy-3-methylbut-2-enyl diphosphate + 2 reduced [2Fe-2S]-[ferredoxin] + 2 H(+). It participates in isoprenoid biosynthesis; dimethylallyl diphosphate biosynthesis; dimethylallyl diphosphate from (2E)-4-hydroxy-3-methylbutenyl diphosphate: step 1/1. It functions in the pathway isoprenoid biosynthesis; isopentenyl diphosphate biosynthesis via DXP pathway; isopentenyl diphosphate from 1-deoxy-D-xylulose 5-phosphate: step 6/6. Its function is as follows. Catalyzes the conversion of 1-hydroxy-2-methyl-2-(E)-butenyl 4-diphosphate (HMBPP) into a mixture of isopentenyl diphosphate (IPP) and dimethylallyl diphosphate (DMAPP). Acts in the terminal step of the DOXP/MEP pathway for isoprenoid precursor biosynthesis. The chain is 4-hydroxy-3-methylbut-2-enyl diphosphate reductase from Synechococcus sp. (strain CC9311).